A 79-amino-acid chain; its full sequence is Large ribosomal subunit protein bL31 (79 aa).

This sequence belongs to the bacterial ribosomal protein bL31 family. Type A subfamily. Part of the 50S ribosomal subunit.

Binds the 23S rRNA. This Trichormus variabilis (strain ATCC 29413 / PCC 7937) (Anabaena variabilis) protein is Large ribosomal subunit protein bL31.